Reading from the N-terminus, the 179-residue chain is 3-hydroxyanthranilate 3,4-dioxygenase 2 (179 aa).

Arg-44 lines the O2 pocket. Positions 48, 60, and 99 each coordinate Fe cation. Glu-60 provides a ligand contact to substrate. Substrate is bound by residues Arg-103 and Glu-113.

It belongs to the 3-HAO family. Fe(2+) serves as cofactor.

The protein resides in the cytoplasm. It carries out the reaction 3-hydroxyanthranilate + O2 = (2Z,4Z)-2-amino-3-carboxymuconate 6-semialdehyde. Its pathway is cofactor biosynthesis; NAD(+) biosynthesis; quinolinate from L-kynurenine: step 3/3. Catalyzes the oxidative ring opening of 3-hydroxyanthranilate to 2-amino-3-carboxymuconate semialdehyde, which spontaneously cyclizes to quinolinate. The chain is 3-hydroxyanthranilate 3,4-dioxygenase 2 (bna1-2) from Aspergillus oryzae (strain ATCC 42149 / RIB 40) (Yellow koji mold).